The sequence spans 408 residues: Aspartate aminotransferase, cytoplasmic (408 aa).

L-aspartate-binding residues include Gly36, Trp133, and Asn187. Lys251 carries the N6-(pyridoxal phosphate)lysine modification. Arg379 provides a ligand contact to L-aspartate.

Belongs to the class-I pyridoxal-phosphate-dependent aminotransferase family. As to quaternary structure, homodimer. It depends on pyridoxal 5'-phosphate as a cofactor. As to expression, expressed in all somatic tissues including the nervous system.

Its subcellular location is the cytoplasm. The enzyme catalyses L-aspartate + 2-oxoglutarate = oxaloacetate + L-glutamate. In terms of biological role, biosynthesis of L-glutamate from L-aspartate. Important regulator of levels of glutamate, the major excitatory neurotransmitter of the central nervous system. This is Aspartate aminotransferase, cytoplasmic from Caenorhabditis elegans.